Here is a 155-residue protein sequence, read N- to C-terminus: 3-hydroxyacyl-[acyl-carrier-protein] dehydratase FabZ (155 aa).

His58 is a catalytic residue.

It belongs to the thioester dehydratase family. FabZ subfamily.

It is found in the cytoplasm. The catalysed reaction is a (3R)-hydroxyacyl-[ACP] = a (2E)-enoyl-[ACP] + H2O. Functionally, involved in unsaturated fatty acids biosynthesis. Catalyzes the dehydration of short chain beta-hydroxyacyl-ACPs and long chain saturated and unsaturated beta-hydroxyacyl-ACPs. The polypeptide is 3-hydroxyacyl-[acyl-carrier-protein] dehydratase FabZ (Rhizobium etli (strain ATCC 51251 / DSM 11541 / JCM 21823 / NBRC 15573 / CFN 42)).